Reading from the N-terminus, the 95-residue chain is Small ribosomal subunit protein bS21 (95 aa).

The tract at residues 56–95 (KLARKKMQREGLLPMKPKPVFGAGPGAGRGGPAAGPRGPR) is disordered. A compositionally biased stretch (gly residues) spans 78-88 (AGPGAGRGGPA).

This sequence belongs to the bacterial ribosomal protein bS21 family.

In Nitrobacter winogradskyi (strain ATCC 25391 / DSM 10237 / CIP 104748 / NCIMB 11846 / Nb-255), this protein is Small ribosomal subunit protein bS21.